We begin with the raw amino-acid sequence, 536 residues long: Putative ATP-dependent RNA helicase L364 (536 aa).

The region spanning 47–214 is the Helicase ATP-binding domain; sequence ISILLKYFLV…IPFYLMNFIP (168 aa). 60–67 contacts ATP; it reads SDTGVGKT. The DEAH box motif lies at 160–163; it reads DESH. A coiled-coil region spans residues 288–334; it reads LSDDSDKIAEAYEEIAELMRELEEKKTQCKNHLAKIQKLKQEIELRK. The Helicase C-terminal domain maps to 338 to 486; it reads FIEQTQLYLE…ISAINDGDLE (149 aa). Residues 502–536 form a disordered region; that stretch reads VLNEPVNNPIEEPVNDPVKDPVEDLTDNQPNIVEV.

Belongs to the DEAD box helicase family. DEAH subfamily.

The catalysed reaction is ATP + H2O = ADP + phosphate + H(+). This chain is Putative ATP-dependent RNA helicase L364, found in Acanthamoeba polyphaga (Amoeba).